The chain runs to 117 residues: Large ribosomal subunit protein bL20 (117 aa).

The protein belongs to the bacterial ribosomal protein bL20 family.

Binds directly to 23S ribosomal RNA and is necessary for the in vitro assembly process of the 50S ribosomal subunit. It is not involved in the protein synthesizing functions of that subunit. This Geotalea uraniireducens (strain Rf4) (Geobacter uraniireducens) protein is Large ribosomal subunit protein bL20.